A 509-amino-acid polypeptide reads, in one-letter code: Maturase K (509 aa).

It belongs to the intron maturase 2 family. MatK subfamily.

Its subcellular location is the plastid. The protein resides in the chloroplast. Its function is as follows. Usually encoded in the trnK tRNA gene intron. Probably assists in splicing its own and other chloroplast group II introns. The chain is Maturase K from Dalea purpurea (Violet prairie clover).